Reading from the N-terminus, the 460-residue chain is Proton extrusion protein PxcA (460 aa).

The disordered stretch occupies residues 84-194 (RLPDPEQNGS…KTNLDNSNAP (111 aa)). The span at 114–136 (NDGKDAENGRQSRDPSILEKLEF) shows a compositional bias: basic and acidic residues. Residues 167–194 (LTSSQPEPSDPSIKTNLAKTNLDNSNAP) are compositionally biased toward polar residues. The next 4 membrane-spanning stretches (helical) occupy residues 242 to 262 (FLLLLAILPLLVQIFSKHFLF), 337 to 357 (GLKNVLADVLSLLVFGWLILI), 373 to 393 (IYGLSDSAKAFIIILFTDVFV), and 420 to 440 (FIYGFIATFPVFLDTLFKYWI).

It belongs to the CemA family.

It is found in the cell inner membrane. Its function is as follows. Required for H(+) efflux immediately after light irradiation to form a rapid H(+) concentration gradient across the thylakoid membranes. Together with PxcL, contributes to transient H(+) uptake following dark to light transition. The sequence is that of Proton extrusion protein PxcA from Synechococcus sp. (strain JA-3-3Ab) (Cyanobacteria bacterium Yellowstone A-Prime).